The sequence spans 156 residues: Ribosomal RNA large subunit methyltransferase H (156 aa).

Residues L73, G104, and 123–128 each bind S-adenosyl-L-methionine; that span reads VSSLTL.

The protein belongs to the RNA methyltransferase RlmH family. Homodimer.

The protein resides in the cytoplasm. It carries out the reaction pseudouridine(1915) in 23S rRNA + S-adenosyl-L-methionine = N(3)-methylpseudouridine(1915) in 23S rRNA + S-adenosyl-L-homocysteine + H(+). In terms of biological role, specifically methylates the pseudouridine at position 1915 (m3Psi1915) in 23S rRNA. The sequence is that of Ribosomal RNA large subunit methyltransferase H from Paraburkholderia phytofirmans (strain DSM 17436 / LMG 22146 / PsJN) (Burkholderia phytofirmans).